A 1496-amino-acid chain; its full sequence is Carbamoyl-phosphate synthase [ammonia], mitochondrial (1496 aa).

A mitochondrion-targeting transit peptide spans 1–33 (MTRILSVFKTAKTGVLNAAAHRYRGFSKAGVRL). The interval 34–214 (MSVKAQTANL…TKVFGKGNPV (181 aa)) is anthranilate phosphoribosyltransferase homolog. A Glutamine amidotransferase type-1 domain is found at 215–401 (RIVAVDCGVK…MSLIKKGKGT (187 aa)). The active-site For GATase activity is C290. 2 consecutive ATP-grasp domains span residues 548–740 (SDKL…KIAL) and 1090–1281 (SAVL…KVMI). One can recognise an MGS-like domain in the interval 1352–1496 (FKLPQKGILI…YRQFGGAKPS (145 aa)). Residues T1388, T1391, W1407, N1433, N1436, and N1445 each coordinate N-acetyl-L-glutamate.

Its subcellular location is the mitochondrion. The catalysed reaction is hydrogencarbonate + NH4(+) + 2 ATP = carbamoyl phosphate + 2 ADP + phosphate + 2 H(+). Its activity is regulated as follows. Requires N-acetyl-L-glutamate (NAG) as an allosteric activator. Its function is as follows. Involved in the urea cycle of ureotelic animals where the enzyme plays an important role in removing excess ammonia from the cell. In Aquarana catesbeiana (American bullfrog), this protein is Carbamoyl-phosphate synthase [ammonia], mitochondrial.